Reading from the N-terminus, the 112-residue chain is Nitrogen regulatory protein P-II (112 aa).

Tyrosine 51 is modified (O-UMP-tyrosine).

This sequence belongs to the P(II) protein family. Homotrimer.

Functionally, in nitrogen-limiting conditions, when the ratio of Gln to 2-ketoglutarate decreases, P-II is uridylylated to P-II-UMP. P-II-UMP allows the deadenylation of glutamine synthetase (GS), thus activating the enzyme. Conversely, in nitrogen excess P-II is deuridylated and promotes the adenylation of GS. P-II indirectly controls the transcription of the GS gene (glnA). P-II prevents NR-II-catalyzed conversion of NR-I to NR-I-phosphate, the transcriptional activator of glnA. When P-II is uridylylated to P-II-UMP, these events are reversed. In Klebsiella oxytoca, this protein is Nitrogen regulatory protein P-II (glnB).